The primary structure comprises 294 residues: uncharacterized protein (294 aa).

This sequence belongs to the glycosyltransferase 2 family.

This is an uncharacterized protein from Haemophilus influenzae (strain ATCC 51907 / DSM 11121 / KW20 / Rd).